The sequence spans 130 residues: MTRVRRGYIARRRRKKMRLFVSSFRGAHSKPIRIVAQQKIRALFSAHRDRDKKKRDFRRLWITRINAAIRETEKGIYYSYSKFIHDLYKRQLILNRKILAQIAILNRNSIYSIYNEILKKEDWKDAPEML.

It belongs to the bacterial ribosomal protein bL20 family.

It localises to the plastid. The protein resides in the chloroplast. Its function is as follows. Binds directly to 23S ribosomal RNA and is necessary for the in vitro assembly process of the 50S ribosomal subunit. It is not involved in the protein synthesizing functions of that subunit. The chain is Large ribosomal subunit protein bL20c from Fagopyrum esculentum subsp. ancestrale (Wild buckwheat).